A 492-amino-acid chain; its full sequence is Catalase isozyme 1 (492 aa).

Catalysis depends on residues histidine 65 and asparagine 138. Residue tyrosine 348 participates in heme binding.

It belongs to the catalase family. Homotetramer. Requires heme as cofactor.

The protein resides in the peroxisome. It catalyses the reaction 2 H2O2 = O2 + 2 H2O. Occurs in almost all aerobically respiring organisms and serves to protect cells from the toxic effects of hydrogen peroxide. In Gossypium hirsutum (Upland cotton), this protein is Catalase isozyme 1 (CAT1).